The primary structure comprises 179 residues: Inner membrane-spanning protein YciB (179 aa).

5 helical membrane-spanning segments follow: residues 22-42 (IYAA…YTWI), 50-70 (MALI…FFHN), 76-96 (WKVT…QWVM), 121-141 (IAWA…AFWM), and 149-169 (FKVF…GVYI).

The protein belongs to the YciB family.

The protein resides in the cell inner membrane. Functionally, plays a role in cell envelope biogenesis, maintenance of cell envelope integrity and membrane homeostasis. This Enterobacter sp. (strain 638) protein is Inner membrane-spanning protein YciB.